We begin with the raw amino-acid sequence, 94 residues long: Putative regulatory protein Sfum_3631 (94 aa).

It belongs to the RemA family.

This Syntrophobacter fumaroxidans (strain DSM 10017 / MPOB) protein is Putative regulatory protein Sfum_3631.